The sequence spans 100 residues: Tuberoinfundibular peptide of 39 residues (100 aa).

A signal peptide spans 1–30 (METCQMSRSPRERLLLLLLLLLLVPWGTGP). Positions 31 to 59 (ASGVALPLAGVFSLRAPGRAWAGLGSPLS) are excised as a propeptide.

This sequence belongs to the parathyroid hormone family. In terms of assembly, ligand of high affinity for the PTH2 receptor (PTH2R). Expressed in testis and, less abundantly, in liver and kidney. Expressed in seminiferous tubuli and several brain regions, including nucleus ruber, caudal paralemniscal nucleus, nucleus centralis pontis, and nucleus subparafascicularis thalami. Expressed in neurons of cerebral cortex and subcortical areas. Expressed in Purkinje cells of cerebellum.

Its subcellular location is the secreted. Plays a role as a potent and selective agonist of PTH2R resulting in adenyl cyclase activation and intracellular calcium levels elevation. Induces protein kinase C beta activation, recruitment of beta-arrestin and PTH2R internalization. May inhibit cell proliferation via its action of PTH2R activation. Neuropeptide which may also have a role in spermatogenesis. May activate nociceptors and nociceptive circuits. In Mus musculus (Mouse), this protein is Tuberoinfundibular peptide of 39 residues (Pth2).